A 249-amino-acid chain; its full sequence is Probable hydroxyacylglutathione hydrolase ECU02_0580 (249 aa).

Zn(2+)-binding residues include histidine 75, histidine 77, aspartate 79, histidine 80, histidine 126, aspartate 144, and histidine 183. Substrate contacts are provided by residues 183–185 and 240–243; these read HDY and RERK.

Belongs to the metallo-beta-lactamase superfamily. Glyoxalase II family. Zn(2+) serves as cofactor.

The protein resides in the cytoplasm. The protein localises to the nucleus. It catalyses the reaction an S-(2-hydroxyacyl)glutathione + H2O = a 2-hydroxy carboxylate + glutathione + H(+). It functions in the pathway secondary metabolite metabolism; methylglyoxal degradation; (R)-lactate from methylglyoxal: step 2/2. In terms of biological role, thiolesterase that catalyzes the hydrolysis of S-D-lactoyl-glutathione to form glutathione and D-lactic acid. The sequence is that of Probable hydroxyacylglutathione hydrolase ECU02_0580 from Encephalitozoon cuniculi (strain GB-M1) (Microsporidian parasite).